The following is a 470-amino-acid chain: Aminoacyl transferase sphA (470 aa).

Pyridoxal 5'-phosphate-binding residues include S212, H244, and T272. K275 is subject to N6-(pyridoxal phosphate)lysine.

This sequence belongs to the class-II pyridoxal-phosphate-dependent aminotransferase family. BioF subfamily. In terms of assembly, homodimer. The cofactor is pyridoxal 5'-phosphate.

It catalyses the reaction aminomalonate + (3R)-hydroxyoctadeca-4,10-dienoyl-[ACP] = 3-oxopresphingofungin + holo-[ACP] + CO2. Its pathway is secondary metabolite biosynthesis. Aminoacyl transferase; part of the gene cluster that mediates the biosynthesis of sphingofungins, bioactive molecules acting as sphingolipid inhibitors via inhibiting serine palmitoyl transferase (SPT). Within the pathway, sphA transfers aminomalonate onto the sphB product 3-hydroxyoctadeca-4,10-dienoyl-ACP to produce 3-keto-presphingofungin. The substrate specificity of sphA using only aminomalonate in Aspergillus fumigatus is responsible for the biosynthesis of sphingofungins B and C but not E and F like in Byssochlamys spectabilis. The PKS sphB does not contain any putative thioesterase domain for releasing the nascent polyketide chain and it has been suggested that aminoacyl transferases can facilitate the polyketide chain release. Sphingofungin biosynthesis starts with the PKS sphB that produces an C18 polyketide precursor 3-hydroxyoctadeca-4,10-dienoyl-ACP containing one delta-6 desaturation and one delta-12 desaturation. The aminoacyl transferase sphA uses the sphB product to produce 3-keto-presphingofungin by adding an aminomalonate molecule. SphF then reduces the C-3 ketone of 3-keto-presphingofungin which leads to presphingofungin. The cytochrome P450 monooxygenase sphH converts presphingofungin into sphingofungin B1 which is further converted to sphingofungin B by the dioxygenase sphC. SphC is also able to convert presphingofungin into sphingofungin B2. The acetyltransferase sphE acetylates sphingofungin B to produce sphingofungin C, but can also convert sphingofungin B1 into sphingofungin C1 and sphingofungin B2 into sphingofungin C2. Finally, sphingofungin C can be spontaneously converted into sphingofungin D. This chain is Aminoacyl transferase sphA, found in Aspergillus fumigatus (strain CBS 144.89 / FGSC A1163 / CEA10) (Neosartorya fumigata).